Here is a 107-residue protein sequence, read N- to C-terminus: NADH-quinone oxidoreductase subunit K (107 aa).

The next 3 helical transmembrane spans lie at 9–29 (IGVNHFLTISVILFGLGMFAV), 36–56 (IVILMGVELILNAANINFLTF), and 68–88 (FSLFVIVLAAAEAAIALAIVI).

The protein belongs to the complex I subunit 4L family. In terms of assembly, NDH-1 is composed of 14 different subunits. Subunits NuoA, H, J, K, L, M, N constitute the membrane sector of the complex.

Its subcellular location is the cell inner membrane. The enzyme catalyses a quinone + NADH + 5 H(+)(in) = a quinol + NAD(+) + 4 H(+)(out). Functionally, NDH-1 shuttles electrons from NADH, via FMN and iron-sulfur (Fe-S) centers, to quinones in the respiratory chain. The immediate electron acceptor for the enzyme in this species is believed to be a menaquinone. Couples the redox reaction to proton translocation (for every two electrons transferred, four hydrogen ions are translocated across the cytoplasmic membrane), and thus conserves the redox energy in a proton gradient. This chain is NADH-quinone oxidoreductase subunit K, found in Chlorobaculum tepidum (strain ATCC 49652 / DSM 12025 / NBRC 103806 / TLS) (Chlorobium tepidum).